The following is a 228-amino-acid chain: ATP synthase subunit beta, mitochondrial (228 aa).

A mitochondrion-targeting transit peptide spans 1–31 (MFALRAAAKADKNLLPFLGQLSRSHAAKAAK). 183 to 190 (GGAGVGKT) is a binding site for ATP.

This sequence belongs to the ATPase alpha/beta chains family. As to quaternary structure, F-type ATPases have 2 components, CF(1) - the catalytic core - and CF(0) - the membrane proton channel. CF(1) has five subunits: alpha(3), beta(3), gamma(1), delta(1), epsilon(1). CF(0) has three main subunits: a, b and c.

Its subcellular location is the mitochondrion. It localises to the mitochondrion inner membrane. It carries out the reaction ATP + H2O + 4 H(+)(in) = ADP + phosphate + 5 H(+)(out). Its function is as follows. Mitochondrial membrane ATP synthase (F(1)F(0) ATP synthase or Complex V) produces ATP from ADP in the presence of a proton gradient across the membrane which is generated by electron transport complexes of the respiratory chain. F-type ATPases consist of two structural domains, F(1) - containing the extramembraneous catalytic core, and F(0) - containing the membrane proton channel, linked together by a central stalk and a peripheral stalk. During catalysis, ATP synthesis in the catalytic domain of F(1) is coupled via a rotary mechanism of the central stalk subunits to proton translocation. Subunits alpha and beta form the catalytic core in F(1). Rotation of the central stalk against the surrounding alpha(3)beta(3) subunits leads to hydrolysis of ATP in three separate catalytic sites on the beta subunits. In Drosophila virilis (Fruit fly), this protein is ATP synthase subunit beta, mitochondrial.